We begin with the raw amino-acid sequence, 422 residues long: Blood group Rh(D) polypeptide (422 aa).

12 helical membrane-spanning segments follow: residues 13–33 (LPLWAFGLQVTFILLFYFLIG), 43–63 (FMAIYQVIQDLTLVAALGFGF), 76–96 (VAFSFFMLALGVQGTILLDYF), 113–135 (FLSIQRATISTLPLLISAGAVLG), 137–159 (VNLVQLAVMVLVEAMTFGAIRVA), 170–190 (IIMMYGHVFGAYFGLTVAWWL), 215–235 (LFAMLGTLFLWIFWPSINSAL), 244–266 (AVFNTYYALAVSTVTATSMSALS), 272–292 (INMVHIHNAVLAGGVAVGAPS), 294–314 (LISSPWIAMVLGLTAGLISIW), 335–355 (YTFGLPGLLGALTYYCLHIIA), and 372–392 (VGALSFAMAMGMVTGLLTGCL).

The protein belongs to the ammonium transporter (TC 2.A.49) family. Rh subfamily. Palmitoylated.

It is found in the cell membrane. In terms of biological role, may be part of an oligomeric complex which is likely to have a transport or channel function in the erythrocyte membrane. The protein is Blood group Rh(D) polypeptide (Rhd) of Rattus norvegicus (Rat).